The primary structure comprises 419 residues: Phosphoglycerate kinase (419 aa).

Substrate contacts are provided by residues 21-23 (DFN), R36, 60-63 (HLGD), R137, and R174. ATP is bound by residues K225, G316, E347, and 376–379 (GGDS).

The protein belongs to the phosphoglycerate kinase family. In terms of assembly, monomer.

It is found in the cytoplasm. The enzyme catalyses (2R)-3-phosphoglycerate + ATP = (2R)-3-phospho-glyceroyl phosphate + ADP. Its pathway is carbohydrate degradation; glycolysis; pyruvate from D-glyceraldehyde 3-phosphate: step 2/5. In Treponema pallidum (strain Nichols), this protein is Phosphoglycerate kinase (pgk).